A 163-amino-acid polypeptide reads, in one-letter code: Retinoic acid receptor responder protein 2 (163 aa).

The N-terminal stretch at 1-20 (MRRLLIPLALWLGAVGVGVA) is a signal peptide. 3 cysteine pairs are disulfide-bonded: C77–C87, C98–C117, and C101–C135. Positions 158–163 (KALPRS) are excised as a propeptide.

Secreted in an inactive precursor form, prochemerin, which is proteolytically processed by a variety of extracellular proteases to generate forms with differing levels of bioactivity. For example, the removal of six amino acids results in chemerin-157, which exhibits the highest activity, while removal of seven amino acids results in chemerin-156 which has slightly less activity. Some proteases are able to cleave at more than one site and chemerin forms may be sequentially processed by different enzymes to modulate activity levels. The coordinated expression and activity of chemerin-modifying enzymes is essential for regulating its bioactivation, inactivation and, consequently, biological function. Cathepsin G cleaves seven C-terminal amino acids from prochemerin (chemerin-156), elastase is able to cleave six (chemerin-157), eight (chemerin-155) or eleven (chemerin-152), plasmin cleaves five amino acids (chemerin-158), and tryptase cleaves five (chemerin-158) or eight (chemerin-155). Multiple cleavages might be required to fully activate chemerin, with an initial tryptase cleavage resulting in chemerin with low activity (chemerin-158), and a second cleavage by carboxypeptidase N or B producing highly active chemerin (chemerin-157).

It is found in the secreted. In terms of biological role, adipocyte-secreted protein (adipokine) that regulates adipogenesis, metabolism and inflammation through activation of the chemokine-like receptor 1 (CMKLR1). Also acts as a ligand for CMKLR2. Can also bind to C-C chemokine receptor-like 2 (CCRL2), but with a lower affinity than it does to CMKLR1 or CMKLR2. Positively regulates adipocyte differentiation, modulates the expression of adipocyte genes involved in lipid and glucose metabolism and might play a role in angiogenesis, a process essential for the expansion of white adipose tissue. Also acts as a pro-inflammatory adipokine, causing an increase in secretion of pro-inflammatory and prodiabetic adipokines, which further impair adipose tissue metabolic function and have negative systemic effects including impaired insulin sensitivity, altered glucose and lipid metabolism, and a decrease in vascular function in other tissues. Can have both pro- and anti-inflammatory properties depending on the modality of enzymatic cleavage by different classes of proteases. Acts as a chemotactic factor for leukocyte populations expressing CMKLR1, particularly immature plasmacytoid dendritic cells, but also immature myeloid DCs, macrophages and natural killer cells. Exerts an anti-inflammatory role by preventing TNF/TNFA-induced VCAM1 expression and monocytes adhesion in vascular endothelial cells. The effect is mediated via inhibiting activation of NF-kappa-B and CRK/p38 through stimulation of AKT1/NOS3 signaling and nitric oxide production. Exhibits an antimicrobial function in the skin. The polypeptide is Retinoic acid receptor responder protein 2 (RARRES2) (Pongo abelii (Sumatran orangutan)).